Here is a 456-residue protein sequence, read N- to C-terminus: CBL-interacting protein kinase 9 (456 aa).

Residues Tyr-27–Phe-282 enclose the Protein kinase domain. ATP contacts are provided by residues Ile-33 to Val-41 and Lys-56. The active-site Proton acceptor is Asp-150. An activation loop region spans residues Asp-168–Glu-197. The region spanning Arg-318–Glu-343 is the NAF domain. Residues Lys-351–Val-380 are PPI.

It belongs to the protein kinase superfamily. CAMK Ser/Thr protein kinase family. SNF1 subfamily. It depends on Mn(2+) as a cofactor.

The enzyme catalyses L-seryl-[protein] + ATP = O-phospho-L-seryl-[protein] + ADP + H(+). It catalyses the reaction L-threonyl-[protein] + ATP = O-phospho-L-threonyl-[protein] + ADP + H(+). In terms of biological role, CIPK serine-threonine protein kinases interact with CBL proteins. Binding of a CBL protein to the regulatory NAF domain of CIPK protein lead to the activation of the kinase in a calcium-dependent manner. The chain is CBL-interacting protein kinase 9 (CIPK9) from Oryza sativa subsp. japonica (Rice).